A 641-amino-acid chain; its full sequence is MGKIIGIDLGTTNSCVAVMEGDKAKVIENAEGARTTPSIVAFTEDGEVLVGQAAKRQAVTNPKNTLFAVKRLIGRRFEEPEVQKDIKLVPYEIFKADNGDAWVRVRDKKMAPPEISARVLQKMKKTAEDYLGEPVTEAVITVPAYFNDSQRQATKDAGKIAGLEVKRIINEPTAAALAYGLDKKRGDSKVAVYDLGGGTFDVSIIEIAEVDGEHQFEVLATNGDTFLGGEDFDMRLIDYLVEEFKKEQGIDLKGDPLAMQRLKESAEKAKIELSSSQQTDVNLPYITADASGPKHMNIKVTRAKLESLVEELIKRTIEPCKVALKDAGLSVSDIDDVILVGGQTRMPKVQDAVKNFFGKEPRKDVNPDEAVAVGAAIQAGVLGGEVKDVLLLDVTPLSLGIETLGGVMTKLIEKNTTIPTKATQVFSTADDNQTAVTVHVLQGEREMASANKSLGRFDLTDIPPAPRGVPQVEVMFDIDANGILNVSAKDKATGKQQSIVIKASSGLSDEEVERMVRDAEAHADEDKRFHELVAARNQADNLVHATEKSLKELGDQVEAGEKQAIESALSELREAMKGDNKDEIETRTQKLAEASGKLAERVYAKQSAEGGAGEGAGAEQASAQQDDVVDAEFEEVDDKKK.

Position 199 is a phosphothreonine; by autocatalysis (Thr199). Over residues 577-590 the composition is skewed to basic and acidic residues; the sequence is KGDNKDEIETRTQK. Positions 577–641 are disordered; the sequence is KGDNKDEIET…EFEEVDDKKK (65 aa). Positions 617–626 are enriched in low complexity; the sequence is GAEQASAQQD. The span at 627–641 shows a compositional bias: acidic residues; that stretch reads DVVDAEFEEVDDKKK.

This sequence belongs to the heat shock protein 70 family.

In terms of biological role, acts as a chaperone. This is Chaperone protein DnaK from Thioalkalivibrio sulfidiphilus (strain HL-EbGR7).